Reading from the N-terminus, the 221-residue chain is Endonuclease V (221 aa).

Mg(2+)-binding residues include Asp44 and Asp112.

Belongs to the endonuclease V family. The cofactor is Mg(2+).

It localises to the cytoplasm. The catalysed reaction is Endonucleolytic cleavage at apurinic or apyrimidinic sites to products with a 5'-phosphate.. DNA repair enzyme involved in the repair of deaminated bases. Selectively cleaves double-stranded DNA at the second phosphodiester bond 3' to a deoxyinosine leaving behind the intact lesion on the nicked DNA. The polypeptide is Endonuclease V (Trichormus variabilis (strain ATCC 29413 / PCC 7937) (Anabaena variabilis)).